The chain runs to 432 residues: Adenylosuccinate synthetase (432 aa).

GTP-binding positions include 13 to 19 and 41 to 43; these read GDEGKGK and GHT. Aspartate 14 functions as the Proton acceptor in the catalytic mechanism. Positions 14 and 41 each coordinate Mg(2+). IMP is bound by residues 14–17, 39–42, threonine 130, arginine 144, glutamine 225, threonine 240, and arginine 304; these read DEGK and NAGH. Histidine 42 functions as the Proton donor in the catalytic mechanism. 300 to 306 is a binding site for substrate; sequence ATTGRRR. Residues arginine 306, 332 to 334, and 415 to 417 each bind GTP; these read KLD and STG.

Belongs to the adenylosuccinate synthetase family. As to quaternary structure, homodimer. It depends on Mg(2+) as a cofactor.

It is found in the cytoplasm. The catalysed reaction is IMP + L-aspartate + GTP = N(6)-(1,2-dicarboxyethyl)-AMP + GDP + phosphate + 2 H(+). It participates in purine metabolism; AMP biosynthesis via de novo pathway; AMP from IMP: step 1/2. Plays an important role in the de novo pathway of purine nucleotide biosynthesis. Catalyzes the first committed step in the biosynthesis of AMP from IMP. This is Adenylosuccinate synthetase from Salmonella arizonae (strain ATCC BAA-731 / CDC346-86 / RSK2980).